The primary structure comprises 642 residues: Core protein VP4 (642 aa).

It belongs to the orbivirus VP4 family.

The protein localises to the virion. In terms of biological role, the VP4 protein is one of the five proteins (with VP1, VP3, VP6 and VP7) which form the inner capsid of the virus. This African horse sickness virus (AHSV) protein is Core protein VP4 (Segment-4).